The sequence spans 369 residues: Phenylalanine--tRNA ligase alpha subunit (369 aa).

Glu269 is a binding site for Mg(2+).

Belongs to the class-II aminoacyl-tRNA synthetase family. Phe-tRNA synthetase alpha subunit type 1 subfamily. As to quaternary structure, tetramer of two alpha and two beta subunits. Mg(2+) is required as a cofactor.

Its subcellular location is the cytoplasm. It catalyses the reaction tRNA(Phe) + L-phenylalanine + ATP = L-phenylalanyl-tRNA(Phe) + AMP + diphosphate + H(+). This is Phenylalanine--tRNA ligase alpha subunit from Brucella melitensis biotype 1 (strain ATCC 23456 / CCUG 17765 / NCTC 10094 / 16M).